The primary structure comprises 143 residues: Large-conductance mechanosensitive channel (143 aa).

Transmembrane regions (helical) follow at residues 16-36 (VIDLAVGVVIGAAFGKIVTAL) and 84-104 (INTVVQFLIIAFAIFLVVKLI).

The protein belongs to the MscL family. As to quaternary structure, homopentamer.

Its subcellular location is the cell inner membrane. Functionally, channel that opens in response to stretch forces in the membrane lipid bilayer. May participate in the regulation of osmotic pressure changes within the cell. This is Large-conductance mechanosensitive channel from Xanthomonas axonopodis pv. citri (strain 306).